A 34-amino-acid polypeptide reads, in one-letter code: NLIQFSNMIQLDRCCETHDNEAEKKGCYPKLTLY.

Histidine 18 is a catalytic residue. Aspartate 19 is a binding site for Ca(2+).

It belongs to the phospholipase A2 family. Group I subfamily. D49 sub-subfamily. Requires Ca(2+) as cofactor. Post-translationally, contains 7 disulfide bonds. In terms of tissue distribution, expressed by the venom gland.

The protein localises to the secreted. The catalysed reaction is a 1,2-diacyl-sn-glycero-3-phosphocholine + H2O = a 1-acyl-sn-glycero-3-phosphocholine + a fatty acid + H(+). Snake venom phospholipase A2 (PLA2) that strongly inhibits platelet aggregation and has a strong anticoagulant activity. PLA2 catalyzes the calcium-dependent hydrolysis of the 2-acyl groups in 3-sn-phosphoglycerides. This chain is Phospholipase A2, found in Pseudechis papuanus (Papuan black snake).